The primary structure comprises 346 residues: MLVLGIESSCDETGLALYDTGRGLLAHALHSQIAMHREYGGVVPELASRDHIRRALPLLEEVLAAGGARREDIDAIAFTQGPGLAGALLVGASIANALAFAWDKPTIGIHHLEGHLLSPLLVAEPPPFPFVALLVSGGHTQLMRVTDVGVYETLGETLDDAAGEAFDKTAKLLGLGYPGGPEVSKLAEAGTPGAVVLPRPMLHSGDLDFSFSGLKTAVLTQMKKLEAAHASGAELDRAKADLARGFVDAAVDVLVAKSLAALKKTRLKRLVVAGGVGANRQLRAALSAAAGKRGFDVHYPDLALCTDNGAMIALAGALRLARWPSQASRDYAFTVKPRWDLASLAR.

The Fe cation site is built by H111 and H115. Substrate is bound by residues 134–138 (LVSGG), D167, G180, and N279. D307 contacts Fe cation.

Belongs to the KAE1 / TsaD family. Fe(2+) serves as cofactor.

Its subcellular location is the cytoplasm. It carries out the reaction L-threonylcarbamoyladenylate + adenosine(37) in tRNA = N(6)-L-threonylcarbamoyladenosine(37) in tRNA + AMP + H(+). Functionally, required for the formation of a threonylcarbamoyl group on adenosine at position 37 (t(6)A37) in tRNAs that read codons beginning with adenine. Is involved in the transfer of the threonylcarbamoyl moiety of threonylcarbamoyl-AMP (TC-AMP) to the N6 group of A37, together with TsaE and TsaB. TsaD likely plays a direct catalytic role in this reaction. This is tRNA N6-adenosine threonylcarbamoyltransferase from Burkholderia thailandensis (strain ATCC 700388 / DSM 13276 / CCUG 48851 / CIP 106301 / E264).